A 351-amino-acid polypeptide reads, in one-letter code: Heat-inducible transcription repressor HrcA (351 aa).

Belongs to the HrcA family.

Functionally, negative regulator of class I heat shock genes (grpE-dnaK-dnaJ and groELS operons). Prevents heat-shock induction of these operons. In Beutenbergia cavernae (strain ATCC BAA-8 / DSM 12333 / CCUG 43141 / JCM 11478 / NBRC 16432 / NCIMB 13614 / HKI 0122), this protein is Heat-inducible transcription repressor HrcA.